We begin with the raw amino-acid sequence, 558 residues long: Polysialic acid transport protein KpsD (558 aa).

The N-terminal stretch at 1–20 (MKLFKSILLIAACHAAQASA) is a signal peptide.

This sequence to E.coli K5 KpsD.

It is found in the periplasm. Its function is as follows. Involved in the translocation of the polysialic acid capsule across the outer membrane to the cell surface. May function as the periplasmic binding element of the PSA transport system, in which it transiently interacts with the membrane component of the transporter, binds polysaccharide and transports the polymer to a component in the outer membrane. The polypeptide is Polysialic acid transport protein KpsD (kpsD) (Escherichia coli).